Consider the following 118-residue polypeptide: DNA-binding protein YG5714_1868 (118 aa).

The protein belongs to the PDCD5 family.

This Saccharolobus islandicus (strain Y.G.57.14 / Yellowstone #1) (Sulfolobus islandicus) protein is DNA-binding protein YG5714_1868.